Here is a 55-residue protein sequence, read N- to C-terminus: Cortexin domain containing 2 (55 aa).

A helical membrane pass occupies residues 16–36 (FAIAFVVLLFLFLIVMIFRCA).

It is found in the membrane. This is Cortexin domain containing 2 from Homo sapiens (Human).